The chain runs to 170 residues: ATP synthase subunit b (170 aa).

A helical membrane pass occupies residues 25–45; it reads LIPNGTFFAVLIIFLIVLGVI. Positions 121 to 147 are disordered; it reads EVAQTLTQADQQLSAQGDQVRSGLESS. Polar residues predominate over residues 122-139; the sequence is VAQTLTQADQQLSAQGDQ.

It belongs to the ATPase B chain family. F-type ATPases have 2 components, F(1) - the catalytic core - and F(0) - the membrane proton channel. F(1) has five subunits: alpha(3), beta(3), gamma(1), delta(1), epsilon(1). F(0) has three main subunits: a(1), b(2) and c(10-14). The alpha and beta chains form an alternating ring which encloses part of the gamma chain. F(1) is attached to F(0) by a central stalk formed by the gamma and epsilon chains, while a peripheral stalk is formed by the delta and b chains.

It localises to the cell membrane. Its function is as follows. F(1)F(0) ATP synthase produces ATP from ADP in the presence of a proton or sodium gradient. F-type ATPases consist of two structural domains, F(1) containing the extramembraneous catalytic core and F(0) containing the membrane proton channel, linked together by a central stalk and a peripheral stalk. During catalysis, ATP synthesis in the catalytic domain of F(1) is coupled via a rotary mechanism of the central stalk subunits to proton translocation. Component of the F(0) channel, it forms part of the peripheral stalk, linking F(1) to F(0). The polypeptide is ATP synthase subunit b (Mycolicibacterium smegmatis (strain ATCC 700084 / mc(2)155) (Mycobacterium smegmatis)).